The chain runs to 454 residues: Carbamoyl phosphate synthase arginine-specific small chain (454 aa).

A mitochondrion-targeting transit peptide spans 1–29; it reads MMFSRFFKAVPARAPAFSSPLPVYQARTM. The 188-residue stretch at 219 to 406 folds into the Glutamine amidotransferase type-1 domain; that stretch reads HVAVLDCGVK…IDSVKKYKNS (188 aa). Cys295 (nucleophile) is an active-site residue. Catalysis depends on residues His379 and Glu381.

Belongs to the CarA family. As to quaternary structure, heterodimer composed of 2 chains; the small (or glutamine) chain promotes the hydrolysis of glutamine to ammonia, which is used by the large (or ammonia) chain to synthesize carbamoyl phosphate.

Its subcellular location is the mitochondrion matrix. It carries out the reaction hydrogencarbonate + L-glutamine + 2 ATP + H2O = carbamoyl phosphate + L-glutamate + 2 ADP + phosphate + 2 H(+). It catalyses the reaction L-glutamine + H2O = L-glutamate + NH4(+). It participates in amino-acid biosynthesis; L-arginine biosynthesis; carbamoyl phosphate from bicarbonate: step 1/1. Small subunit of the arginine-specific carbamoyl phosphate synthase (CPSase). CPSase catalyzes the formation of carbamoyl phosphate from the ammonia moiety of glutamine, carbonate, and phosphate donated by ATP, the first step of the arginine biosynthetic pathway. The small subunit (glutamine amidotransferase) binds and cleaves glutamine to supply the large subunit with the substrate ammonia. In Emericella nidulans (strain FGSC A4 / ATCC 38163 / CBS 112.46 / NRRL 194 / M139) (Aspergillus nidulans), this protein is Carbamoyl phosphate synthase arginine-specific small chain (cpa-1).